A 178-amino-acid chain; its full sequence is Aminoglycoside 2'-N-acetyltransferase (178 aa).

The 164-residue stretch at 8 to 171 folds into the N-acetyltransferase domain; sequence LHTSQLTLSE…VDFTASLYCD (164 aa). Residues Asp32 and 79 to 80 contribute to the substrate site; that span reads EA. CoA-binding positions include 81 to 83 and 88 to 93; these read MVV and RRQGIG. Residues Ser114 and 148–149 contribute to the substrate site; that span reads EE.

The protein belongs to the AAC(2')-I acetyltransferase family. As to quaternary structure, homodimer.

The catalysed reaction is gentamicin C1a + acetyl-CoA = N(2')-acetylgentamicin C1a + CoA + H(+). Catalyzes the coenzyme A-dependent acetylation of the 2' hydroxyl or amino group of a broad spectrum of aminoglycosides. It confers resistance to aminoglycosides. The sequence is that of Aminoglycoside 2'-N-acetyltransferase (aac) from Providencia stuartii.